A 150-amino-acid polypeptide reads, in one-letter code: Large ribosomal subunit protein bL9 (150 aa).

Belongs to the bacterial ribosomal protein bL9 family.

Its function is as follows. Binds to the 23S rRNA. In Streptococcus equi subsp. zooepidemicus (strain MGCS10565), this protein is Large ribosomal subunit protein bL9.